We begin with the raw amino-acid sequence, 373 residues long: Probable pectin lyase C (373 aa).

The N-terminal stretch at 1–18 is a signal peptide; the sequence is MKVPFLQLLCLNAALASA. 2 cysteine pairs are disulfide-bonded: Cys-81–Cys-100 and Cys-90–Cys-220. Residue Asn-123 is glycosylated (N-linked (GlcNAc...) asparagine). The active site involves Arg-250. A disulfide bridge links Cys-316 with Cys-324.

This sequence belongs to the polysaccharide lyase 1 family.

The protein resides in the secreted. It catalyses the reaction Eliminative cleavage of (1-&gt;4)-alpha-D-galacturonan methyl ester to give oligosaccharides with 4-deoxy-6-O-methyl-alpha-D-galact-4-enuronosyl groups at their non-reducing ends.. Its function is as follows. Pectinolytic enzymes consist of four classes of enzymes: pectin lyase, polygalacturonase, pectin methylesterase and rhamnogalacturonase. Among pectinolytic enzymes, pectin lyase is the most important in depolymerization of pectin, since it cleaves internal glycosidic bonds of highly methylated pectins. This Aspergillus niger (strain ATCC MYA-4892 / CBS 513.88 / FGSC A1513) protein is Probable pectin lyase C (pelC).